The following is a 371-amino-acid chain: Queuine tRNA-ribosyltransferase (371 aa).

D93 (proton acceptor) is an active-site residue. Substrate is bound by residues 93-97 (DSGGF), D147, Q191, and G218. An RNA binding region spans residues 249–255 (GVGTVVD). Catalysis depends on D268, which acts as the Nucleophile. The RNA binding; important for wobble base 34 recognition stretch occupies residues 273 to 277 (TRNAR). 4 residues coordinate Zn(2+): C306, C308, C311, and H337.

The protein belongs to the queuine tRNA-ribosyltransferase family. In terms of assembly, homodimer. Within each dimer, one monomer is responsible for RNA recognition and catalysis, while the other monomer binds to the replacement base PreQ1. The cofactor is Zn(2+).

The enzyme catalyses 7-aminomethyl-7-carbaguanine + guanosine(34) in tRNA = 7-aminomethyl-7-carbaguanosine(34) in tRNA + guanine. The protein operates within tRNA modification; tRNA-queuosine biosynthesis. Its function is as follows. Catalyzes the base-exchange of a guanine (G) residue with the queuine precursor 7-aminomethyl-7-deazaguanine (PreQ1) at position 34 (anticodon wobble position) in tRNAs with GU(N) anticodons (tRNA-Asp, -Asn, -His and -Tyr). Catalysis occurs through a double-displacement mechanism. The nucleophile active site attacks the C1' of nucleotide 34 to detach the guanine base from the RNA, forming a covalent enzyme-RNA intermediate. The proton acceptor active site deprotonates the incoming PreQ1, allowing a nucleophilic attack on the C1' of the ribose to form the product. After dissociation, two additional enzymatic reactions on the tRNA convert PreQ1 to queuine (Q), resulting in the hypermodified nucleoside queuosine (7-(((4,5-cis-dihydroxy-2-cyclopenten-1-yl)amino)methyl)-7-deazaguanosine). In Leptospira biflexa serovar Patoc (strain Patoc 1 / Ames), this protein is Queuine tRNA-ribosyltransferase.